The primary structure comprises 136 residues: Small ribosomal subunit protein uS9 (136 aa).

Belongs to the universal ribosomal protein uS9 family.

The sequence is that of Small ribosomal subunit protein uS9 from Borrelia recurrentis (strain A1).